A 488-amino-acid polypeptide reads, in one-letter code: Glutamyl-tRNA(Gln) amidotransferase subunit A (488 aa).

Catalysis depends on charge relay system residues Lys-77 and Ser-152. The active-site Acyl-ester intermediate is Ser-176.

Belongs to the amidase family. GatA subfamily. As to quaternary structure, heterotrimer of A, B and C subunits.

The enzyme catalyses L-glutamyl-tRNA(Gln) + L-glutamine + ATP + H2O = L-glutaminyl-tRNA(Gln) + L-glutamate + ADP + phosphate + H(+). Its function is as follows. Allows the formation of correctly charged Gln-tRNA(Gln) through the transamidation of misacylated Glu-tRNA(Gln) in organisms which lack glutaminyl-tRNA synthetase. The reaction takes place in the presence of glutamine and ATP through an activated gamma-phospho-Glu-tRNA(Gln). This Streptococcus pyogenes serotype M28 (strain MGAS6180) protein is Glutamyl-tRNA(Gln) amidotransferase subunit A.